A 40-amino-acid polypeptide reads, in one-letter code: Photosystem II reaction center protein J (40 aa).

The helical transmembrane segment at 8-28 threads the bilayer; that stretch reads IPLWIIGTGAGILVIGLIGIF.

The protein belongs to the PsbJ family. As to quaternary structure, PSII is composed of 1 copy each of membrane proteins PsbA, PsbB, PsbC, PsbD, PsbE, PsbF, PsbH, PsbI, PsbJ, PsbK, PsbL, PsbM, PsbT, PsbX, PsbY, PsbZ, Psb30/Ycf12, at least 3 peripheral proteins of the oxygen-evolving complex and a large number of cofactors. It forms dimeric complexes.

It localises to the plastid. It is found in the chloroplast thylakoid membrane. One of the components of the core complex of photosystem II (PSII). PSII is a light-driven water:plastoquinone oxidoreductase that uses light energy to abstract electrons from H(2)O, generating O(2) and a proton gradient subsequently used for ATP formation. It consists of a core antenna complex that captures photons, and an electron transfer chain that converts photonic excitation into a charge separation. The sequence is that of Photosystem II reaction center protein J from Aethionema grandiflorum (Persian stone-cress).